A 629-amino-acid chain; its full sequence is DNA ligase B (629 aa).

The active-site N6-AMP-lysine intermediate is the K151. Positions 588 to 597 (LQKQHGTNTR) are enriched in polar residues. Residues 588-629 (LQKQHGTNTRNEQKGDVRRVDVKQDNGTTWLPEQDSNLRPND) form a disordered region. The segment covering 598 to 611 (NEQKGDVRRVDVKQ) has biased composition (basic and acidic residues). The segment covering 612–629 (DNGTTWLPEQDSNLRPND) has biased composition (polar residues).

Belongs to the NAD-dependent DNA ligase family. LigB subfamily.

The enzyme catalyses NAD(+) + (deoxyribonucleotide)n-3'-hydroxyl + 5'-phospho-(deoxyribonucleotide)m = (deoxyribonucleotide)n+m + AMP + beta-nicotinamide D-nucleotide.. In terms of biological role, catalyzes the formation of phosphodiester linkages between 5'-phosphoryl and 3'-hydroxyl groups in double-stranded DNA using NAD as a coenzyme and as the energy source for the reaction. The protein is DNA ligase B of Chromohalobacter salexigens (strain ATCC BAA-138 / DSM 3043 / CIP 106854 / NCIMB 13768 / 1H11).